The sequence spans 242 residues: Probable septum site-determining protein MinC (242 aa).

Belongs to the MinC family. Interacts with MinD and FtsZ.

In terms of biological role, cell division inhibitor that blocks the formation of polar Z ring septums. Rapidly oscillates between the poles of the cell to destabilize FtsZ filaments that have formed before they mature into polar Z rings. Prevents FtsZ polymerization. The polypeptide is Probable septum site-determining protein MinC (Thioalkalivibrio sulfidiphilus (strain HL-EbGR7)).